Reading from the N-terminus, the 317-residue chain is Melanocyte-stimulating hormone receptor (317 aa).

At 1 to 37 (MPAQGSQRSXLGSLNSTLMATPSLGLAANQSGPQCLE) the chain is on the extracellular side. N-linked (GlcNAc...) asparagine glycosylation is found at N15 and N29. A helical membrane pass occupies residues 38-63 (VSVPDGLFLCLGLVSLVENMLVVAAI). Topologically, residues 64 to 72 (AKNRNLHSP) are cytoplasmic. A helical transmembrane segment spans residues 73–93 (MYCFICCLALSDLLVSISNVL). At 94-118 (ETAVMLLLEAGALAVGATVVQQLDN) the chain is on the extracellular side. A helical membrane pass occupies residues 119-140 (VIDVLICSSMVSSLCFLGAIAM). Over 141 to 163 (DRYISIFYALRYHSIVTLSRAQW) the chain is Cytoplasmic. The chain crosses the membrane as a helical span at residues 164-183 (ATAAVWAASILSSTLFIAYY). Residues 184–191 (DRTVVLLC) lie on the Extracellular side of the membrane. A helical transmembrane segment spans residues 192-211 (LVVFFLAMLVLMAVLYAHML). Over 212-240 (TQACQHVQGITRLHKRQHLVQQGFGLKGA) the chain is Cytoplasmic. The helical transmembrane segment at 241 to 266 (ATLTILLGVFLLCWGPFFLHLTLIAV) threads the bilayer. At 267–279 (CPQHPTCSCVFKN) the chain is on the extracellular side. The chain crosses the membrane as a helical span at residues 280-300 (FKLFLALIICNAIVDPLIYAF). Residues 301–317 (RSQELRKTLKEVLLFSW) lie on the Cytoplasmic side of the membrane.

It belongs to the G-protein coupled receptor 1 family. As to quaternary structure, interacts with MGRN1, but does not undergo MGRN1-mediated ubiquitination; this interaction competes with GNAS-binding and thus inhibits agonist-induced cAMP production. Interacts with OPN3; the interaction results in a decrease in MC1R-mediated cAMP signaling and ultimately a decrease in melanin production in melanocytes.

The protein localises to the cell membrane. Its function is as follows. Receptor for MSH (alpha, beta and gamma) and ACTH. The activity of this receptor is mediated by G proteins which activate adenylate cyclase. Mediates melanogenesis, the production of eumelanin (black/brown) and phaeomelanin (red/yellow), via regulation of cAMP signaling in melanocytes. In Galago senegalensis (Northern lesser bushbaby), this protein is Melanocyte-stimulating hormone receptor (MC1R).